An 842-amino-acid chain; its full sequence is MVAIPRVAAARSLARQLARQSLRTTSFASAPVRIAIASTPLARSPSSFRSLSSSTRRSAAAAAAAAAAKATPAHDDSHTPMAVLTEADLGRLVRQRNVGISAHIDSGKTTLTERVLFYTGRIKDIHEVRGRDAVGAKMDHMELEREKGITIQSAATYCSWKATPPTEKASVSGDAANVESKELMEKKQDFHINIIDTPGHVDFTIEVERALRVLDGAVLVLCAVSGVQSQTITVDRQMRRYSVPRISFINKMDRAGANPWRVIGQIRNKLKMPAAAVQIPIGAEDDFNGVIDLIRWKAVYNEGHKGIDIRETDEIPAEYLELAKQKRAELIEQLAEVDDEMTEMFIEEREPTIEELAAAIRRTTIRCQFSPVFLGSAIKNKGVQAMLDGVCSYLPNPAEVPATAMDMSSAATKKAAEEAAQAAGEDQEAAAEARKNAAPPVLPLSPASEAPLVGLAFKLEEGKYGQLTYMRVYQGTLKRGNLIFNARTGKKVKVPRLVRMHSNDMEDVDEIGAGEICAMFGVECSSGDTFTDGTTQLSMTSMFVPEPVISLAITPEGKESQNFSRALNRFQKEDPTFRVHVDKESNETIISGMGELHLEIYVERMRREYNVPCTTGKPRVAFRETIEKKATFAYTHKKQTGGAGQFGRVMGYIEPMEVDPETGVDTAFDNRVVGGSIPNGYISACEKGFYDALEKGALSGHAVTGVRFVLEDGAAHSVDSSELAFRLATAGAFREAYQKANPVILEPKMTVEVVAPIEFQGAVIGALNQRKGTISDTEVREDEFTLTAEVSLNDMFGYSSQLRGLTQGKGEFSMEYKCHTPVMMNIQKEMHEAYRKKQTEKK.

A mitochondrion-targeting transit peptide spans 1 to 58 (MVAIPRVAAARSLARQLARQSLRTTSFASAPVRIAIASTPLARSPSSFRSLSSSTRRS). The 306-residue stretch at 93-398 (VRQRNVGISA…GVCSYLPNPA (306 aa)) folds into the tr-type G domain. Residues 102–109 (AHIDSGKT), 196–200 (DTPGH), and 250–253 (NKMD) contribute to the GTP site. Residues 423 to 442 (AGEDQEAAAEARKNAAPPVL) are disordered.

Belongs to the TRAFAC class translation factor GTPase superfamily. Classic translation factor GTPase family. EF-G/EF-2 subfamily.

It is found in the mitochondrion. The protein operates within protein biosynthesis; polypeptide chain elongation. In terms of biological role, mitochondrial GTPase that catalyzes the GTP-dependent ribosomal translocation step during translation elongation. During this step, the ribosome changes from the pre-translocational (PRE) to the post-translocational (POST) state as the newly formed A-site-bound peptidyl-tRNA and P-site-bound deacylated tRNA move to the P and E sites, respectively. Catalyzes the coordinated movement of the two tRNA molecules, the mRNA and conformational changes in the ribosome. This Mycosarcoma maydis (Corn smut fungus) protein is Elongation factor G, mitochondrial.